Consider the following 234-residue polypeptide: Orotidine 5'-phosphate decarboxylase (234 aa).

Substrate-binding positions include aspartate 11, lysine 33, 60–69 (DLKFHDIPNT), threonine 120, arginine 181, glutamine 190, glycine 210, and arginine 211. Lysine 62 acts as the Proton donor in catalysis.

Belongs to the OMP decarboxylase family. Type 1 subfamily. Homodimer.

It carries out the reaction orotidine 5'-phosphate + H(+) = UMP + CO2. The protein operates within pyrimidine metabolism; UMP biosynthesis via de novo pathway; UMP from orotate: step 2/2. In terms of biological role, catalyzes the decarboxylation of orotidine 5'-monophosphate (OMP) to uridine 5'-monophosphate (UMP). This Aliivibrio fischeri (strain ATCC 700601 / ES114) (Vibrio fischeri) protein is Orotidine 5'-phosphate decarboxylase.